A 282-amino-acid polypeptide reads, in one-letter code: Probable metal transport system membrane protein TM_0125 (282 aa).

Transmembrane regions (helical) follow at residues 33 to 53 (AFVGGILVASLSGLVSPIVVF), 58 to 78 (FIGDGTAHAVFAGLAAATLIG), 79 to 99 (ADHRLIAFATALLFAFAVSLF), 109 to 129 (AIGILLPFFMAVGVVLFSVSG), 148 to 168 (STDVAITAVVLALSVILTVVF), 184 to 204 (FYGIKTDLIRFLITSFIAITV), 210 to 230 (VVGVILTGALLILPGLVSKIF), 234 to 254 (FWSLTTISVIFSTGVFFAGFL), and 259 to 279 (LDLPPGPVIVIIAFVSFLPML).

The protein belongs to the ABC-3 integral membrane protein family.

It localises to the cell inner membrane. Part of an ATP-driven transport system TM_0123/TM_0124/TM_0125 for a metal. The polypeptide is Probable metal transport system membrane protein TM_0125 (Thermotoga maritima (strain ATCC 43589 / DSM 3109 / JCM 10099 / NBRC 100826 / MSB8)).